Reading from the N-terminus, the 186-residue chain is Photosystem I assembly protein Ycf4 (186 aa).

A run of 2 helical transmembrane segments spans residues Phe-22 to Ser-42 and Ile-57 to Ser-77.

Belongs to the Ycf4 family.

It localises to the plastid. Its subcellular location is the chloroplast thylakoid membrane. Its function is as follows. Seems to be required for the assembly of the photosystem I complex. This is Photosystem I assembly protein Ycf4 from Dioscorea elephantipes (Elephant's foot yam).